The following is a 237-amino-acid chain: Uridylate kinase (237 aa).

K12 to G15 contacts ATP. The tract at residues G20 to G25 is involved in allosteric activation by GTP. Residue G54 coordinates UMP. ATP is bound by residues G55 and R59. Residues D74 and T135 to T142 contribute to the UMP site. ATP is bound by residues T162, Y168, and D171.

It belongs to the UMP kinase family. In terms of assembly, homohexamer.

The protein resides in the cytoplasm. It catalyses the reaction UMP + ATP = UDP + ADP. It functions in the pathway pyrimidine metabolism; CTP biosynthesis via de novo pathway; UDP from UMP (UMPK route): step 1/1. Its activity is regulated as follows. Allosterically activated by GTP. Inhibited by UTP. In terms of biological role, catalyzes the reversible phosphorylation of UMP to UDP. The chain is Uridylate kinase from Haemophilus influenzae (strain PittEE).